The sequence spans 478 residues: Microfibrillar-associated protein 1 (478 aa).

Positions 1 to 20 are enriched in low complexity; the sequence is MSAATAAAAASGIQSTAGAI. 2 disordered regions span residues 1–276 and 456–478; these read MSAA…RRAT and NEHA…KKME. The span at 53 to 62 shows a compositional bias: acidic residues; it reads SSEESDDDDF. Residues 107-128 show a composition bias toward basic and acidic residues; that stretch reads DDPRLRRLRQRPVDMEDMERER. Acidic residues predominate over residues 140-153; sequence IMESDSEDEEEDEG. The span at 160 to 170 shows a compositional bias: polar residues; the sequence is RGTNKITLASE. Acidic residues predominate over residues 171 to 181; it reads SDTDAELSDTE. The segment covering 197–212 has biased composition (basic and acidic residues); sequence QREEEVLQKEDEKQSE. The segment covering 214–231 has biased composition (acidic residues); that stretch reads SESESSEYEEETESEEDN. The segment at 229 to 478 is interaction with Prp38; sequence EDNEPRLKPL…PTGSKRKKME (250 aa). Residues 245–268 are compositionally biased toward basic and acidic residues; that stretch reads RATIQEKEREAQKQKQLEAEAKRA.

It belongs to the MFAP1 family. Component of the spliceosome B complex. Interacts (via C-terminus) with Prp38.

The protein localises to the nucleus. In terms of biological role, required for pre-mRNA splicing. The protein is Microfibrillar-associated protein 1 of Drosophila melanogaster (Fruit fly).